Consider the following 449-residue polypeptide: GTPase Der (449 aa).

EngA-type G domains lie at 4–174 and 183–358; these read PIVA…PPKT and LRVA…AQRQ. Residues 10–17, 57–61, 126–129, 189–196, 236–240, and 301–304 each bind GTP; these read GRPNVGKS, DTAGL, NKCD, DTAGI, and NKWD. A KH-like domain is found at 359-444; the sequence is KRIPTSELNN…PIVIVFRSRE (86 aa).

Belongs to the TRAFAC class TrmE-Era-EngA-EngB-Septin-like GTPase superfamily. EngA (Der) GTPase family. In terms of assembly, associates with the 50S ribosomal subunit.

Functionally, GTPase that plays an essential role in the late steps of ribosome biogenesis. The protein is GTPase Der of Chloroflexus aggregans (strain MD-66 / DSM 9485).